We begin with the raw amino-acid sequence, 461 residues long: Growth/differentiation factor 7 (461 aa).

A signal peptide spans Met1–Pro19. The propeptide occupies Arg20–Arg315. An N-linked (GlcNAc...) asparagine glycan is attached at Asn79. The disordered stretch occupies residues Leu287 to Cys360. Residues Gly323 to Arg350 show a composition bias toward gly residues. The segment covering Gly351–Cys360 has biased composition (basic residues). 3 disulfides stabilise this stretch: Cys360–Cys426, Cys389–Cys458, and Cys393–Cys460.

The protein belongs to the TGF-beta family. Homodimer; disulfide-linked.

It localises to the secreted. The protein is Growth/differentiation factor 7 (Gdf7) of Mus musculus (Mouse).